Consider the following 61-residue polypeptide: L-amino-acid oxidase (61 aa).

43–44 (MA) serves as a coordination point for FAD.

This sequence belongs to the flavin monoamine oxidase family. FIG1 subfamily. In terms of assembly, homodimer; non-covalently linked. It depends on FAD as a cofactor. Post-translationally, N-glycosylated. As to expression, expressed by the venom gland.

It is found in the secreted. It catalyses the reaction an L-alpha-amino acid + O2 + H2O = a 2-oxocarboxylate + H2O2 + NH4(+). The catalysed reaction is L-leucine + O2 + H2O = 4-methyl-2-oxopentanoate + H2O2 + NH4(+). Catalyzes an oxidative deamination of predominantly hydrophobic and aromatic L-amino acids, thus producing hydrogen peroxide that may contribute to the diverse toxic effects of this enzyme. Shows activity on L-Leu. Exhibits diverse biological activities, such as apoptosis, antibacterial activities against both Gram-negative and Gram-positive bacteria and antiparasitic activities, as well as induction of platelet aggregation. Effects of snake L-amino oxidases on platelets are controversial, since they either induce aggregation or inhibit agonist-induced aggregation. These different effects are probably due to different experimental conditions. This protein may also induce hemorrhage, hemolysis, and edema. The sequence is that of L-amino-acid oxidase from Crotalus durissus cascavella (Northeastern Brazilian rattlesnake).